Here is a 129-residue protein sequence, read N- to C-terminus: MARVKRAVNAQKKRRTVLEQASGYRGQRSRLYRKAKEQVTHSLVYAYRDRKARKGDFRRLWIQRINAAARAEGMTYNRFIQGLKAAEIEVDRRMLAELAVSDPAAFGALVRTAKAALPVAPVAAEGTAA.

This sequence belongs to the bacterial ribosomal protein bL20 family.

Its function is as follows. Binds directly to 23S ribosomal RNA and is necessary for the in vitro assembly process of the 50S ribosomal subunit. It is not involved in the protein synthesizing functions of that subunit. The sequence is that of Large ribosomal subunit protein bL20 from Kineococcus radiotolerans (strain ATCC BAA-149 / DSM 14245 / SRS30216).